The following is a 652-amino-acid chain: DNA ligase (652 aa).

NAD(+) contacts are provided by residues 29–33, 78–79, and E107; these read DSDYD and SL. The N6-AMP-lysine intermediate role is filled by K109. NAD(+)-binding residues include R130, E164, K278, and K302. Zn(2+)-binding residues include C395, C398, C413, and C418. The 76-residue stretch at 577 to 652 folds into the BRCT domain; that stretch reads NSDAALFGLT…IEDEDWLRQL (76 aa).

It belongs to the NAD-dependent DNA ligase family. LigA subfamily. Mg(2+) is required as a cofactor. It depends on Mn(2+) as a cofactor.

It carries out the reaction NAD(+) + (deoxyribonucleotide)n-3'-hydroxyl + 5'-phospho-(deoxyribonucleotide)m = (deoxyribonucleotide)n+m + AMP + beta-nicotinamide D-nucleotide.. Functionally, DNA ligase that catalyzes the formation of phosphodiester linkages between 5'-phosphoryl and 3'-hydroxyl groups in double-stranded DNA using NAD as a coenzyme and as the energy source for the reaction. It is essential for DNA replication and repair of damaged DNA. The polypeptide is DNA ligase (Streptococcus pyogenes serotype M4 (strain MGAS10750)).